Here is a 327-residue protein sequence, read N- to C-terminus: Probable cell division protein WhiA (327 aa).

Positions 275 to 308 (SLEELGQLADPPMTKDAVAGRIRRLLSMADRKAK) form a DNA-binding region, H-T-H motif. Residues 306 to 327 (KAKETGIPDTESAVTADLLDDA) are disordered.

This sequence belongs to the WhiA family.

Functionally, involved in cell division and chromosome segregation. The polypeptide is Probable cell division protein WhiA (Rhodococcus jostii (strain RHA1)).